The primary structure comprises 932 residues: Protocadherin gamma-A12 (932 aa).

The N-terminal stretch at Met1–Thr29 is a signal peptide. 6 consecutive Cadherin domains span residues Gln30–Phe133, Arg134–Phe242, Ala243–Val347, Val348–Phe452, Pro453–Ile562, and Asp570–Asn683. Topologically, residues Gln30–Tyr692 are extracellular. N-linked (GlcNAc...) asparagine glycosylation is found at Asn265, Asn419, and Asn545. A helical membrane pass occupies residues Leu693–Ala713. At Leu714–Lys932 the chain is on the cytoplasmic side. 2 disordered regions span residues Gly803 to Asn841 and Ala902 to Lys932. Residues Trp816–Asn841 are compositionally biased toward polar residues. The span at Asn922–Lys932 shows a compositional bias: basic residues.

Its subcellular location is the cell membrane. Potential calcium-dependent cell-adhesion protein. May be involved in the establishment and maintenance of specific neuronal connections in the brain. The chain is Protocadherin gamma-A12 (PCDHGA12) from Pan troglodytes (Chimpanzee).